The following is a 420-amino-acid chain: Dynein axonemal assembly factor 4 (420 aa).

Positions 3–87 (LQVSDYSWQQ…KEAAMWETLS (85 aa)) constitute a CS domain. Residues 7–103 (DYSWQQTKTA…EMMQRIREKS (97 aa)) form a mediates interaction with ESR1 and STUB1 region. TPR repeat units lie at residues 290-323 (PEWL…NNKM), 324-357 (PLLY…LMPP), and 366-399 (MKAH…DPSN).

As to quaternary structure, interacts with ZMYND10. Interacts with STUB1. Interacts with ESR1 and ESR2. Interacts with DNAAF2. Interacts with CCT3, CCT4, CCT5 and CCT8. Interacts with DNAAF6/PIH1D3.

Its subcellular location is the nucleus. It localises to the cytoplasm. The protein localises to the cell projection. The protein resides in the neuron projection. It is found in the dynein axonemal particle. Involved in neuronal migration during development of the cerebral neocortex. May regulate the stability and proteasomal degradation of the estrogen receptors that play an important role in neuronal differentiation, survival and plasticity. Axonemal dynein assembly factor required for ciliary motility. This is Dynein axonemal assembly factor 4 from Pan paniscus (Pygmy chimpanzee).